The sequence spans 104 residues: Large ribosomal subunit protein uL24 (104 aa).

Belongs to the universal ribosomal protein uL24 family. Part of the 50S ribosomal subunit.

Functionally, one of two assembly initiator proteins, it binds directly to the 5'-end of the 23S rRNA, where it nucleates assembly of the 50S subunit. In terms of biological role, one of the proteins that surrounds the polypeptide exit tunnel on the outside of the subunit. The polypeptide is Large ribosomal subunit protein uL24 (Methylorubrum populi (strain ATCC BAA-705 / NCIMB 13946 / BJ001) (Methylobacterium populi)).